Reading from the N-terminus, the 396-residue chain is MKSLKTIDVAGKRVLVRVDFNVPLDDQQQITDDTRIQSAVPTIEYLVGAGAKVIVCSHLGRPKGKPDPVFSLAPTARRLGELLDRPVEMANTCVGPDVVSRIARMAPGDVLMLENLRFHPGEANDDDAFARALAALCDVYVDDAFAVSHRANASVDAVTKYAPVCAPGFLMEKELGAFGKALENPARPFVAIVGGAKVSSKLPALQHLLQEVDRLIIGGAMANTFLAAKGVNVGKSKIEQELIGEARSVIRQAAEKKVELFLPVDVIVAEKIDPDADRQAVSVDRIPADAMALDIGPETSRLFGDALKDAKTIVWNGPMGIFEMEAFAAGTKAVAAAVADSKAFTVVGGGDTVSAVHEAGVADRISYISTGGGAFLELMEGKTLPGVAALERNQPA.

Residues 19-21 (DFN), Arg-35, 58-61 (HLGR), Arg-117, and Arg-150 each bind substrate. Residues Lys-201, Glu-323, and 349–352 (GGDT) each bind ATP.

It belongs to the phosphoglycerate kinase family. As to quaternary structure, monomer.

The protein localises to the cytoplasm. It carries out the reaction (2R)-3-phosphoglycerate + ATP = (2R)-3-phospho-glyceroyl phosphate + ADP. The protein operates within carbohydrate degradation; glycolysis; pyruvate from D-glyceraldehyde 3-phosphate: step 2/5. This chain is Phosphoglycerate kinase, found in Desulfosudis oleivorans (strain DSM 6200 / JCM 39069 / Hxd3) (Desulfococcus oleovorans).